Reading from the N-terminus, the 436-residue chain is MTKPIVAIVGRPNVGKSTIFNRVVGERVSIVEDTPGVTRDRIYSSGEWLTHDFNIIDTGGIEIGDAPFQTQIRAQAEVAIDEADVIIFMVNVREGLTQSDEMVAQMLYKSKKPVVLAVNKVDNPEMRNEIYDFYSLGFGDPYPISGSHGLGLGDLLDAVVKHFKEEEPDPYDDDTIRLSIIGRPNVGKSSLVNAILGEDRVIVSNVAGTTRDAVDTEYSYDDQDYVLIDTAGMRKKGKVYENTEKYSVLRALKAIERSNVILIVIDAEQGIIEQDKRVAGYAHEEGKAIVIVVNKWDTVDKETNTMKKFKDEVRKEFQFLDYAEIAFVSAKEKQRLRTLFPYIKEASENHKKRVQSSTLNEVVTDAISMNPTPTDKGRRLNVFYATQVAIEPPTFIVFVNDVELMHFSYKRYLENQIRAAFGFEGTPVHIIARKRN.

EngA-type G domains follow at residues 4–167 (PIVA…KEEE) and 176–351 (IRLS…ENHK). Residues 10-17 (GRPNVGKS), 57-61 (DTGGI), 119-122 (NKVD), 182-189 (GRPNVGKS), 229-233 (DTAGM), and 294-297 (NKWD) contribute to the GTP site. Residues 352–436 (KRVQSSTLNE…PVHIIARKRN (85 aa)) form the KH-like domain.

It belongs to the TRAFAC class TrmE-Era-EngA-EngB-Septin-like GTPase superfamily. EngA (Der) GTPase family. In terms of assembly, associates with the 50S ribosomal subunit.

Functionally, GTPase that plays an essential role in the late steps of ribosome biogenesis. This is GTPase Der from Staphylococcus saprophyticus subsp. saprophyticus (strain ATCC 15305 / DSM 20229 / NCIMB 8711 / NCTC 7292 / S-41).